The primary structure comprises 466 residues: tRNA-2-methylthio-N(6)-dimethylallyladenosine synthase (466 aa).

An MTTase N-terminal domain is found at 5–125 (RKLHIKSYGC…LPELLARAGR (121 aa)). Residues cysteine 14, cysteine 50, cysteine 88, cysteine 166, cysteine 170, and cysteine 173 each contribute to the [4Fe-4S] cluster site. Residues 152–384 (RARGVSAFVT…QSLIDSQQAA (233 aa)) enclose the Radical SAM core domain. In terms of domain architecture, TRAM spans 387–449 (KAAIGTVVDV…RYSLLGELVA (63 aa)).

Belongs to the methylthiotransferase family. MiaB subfamily. In terms of assembly, monomer. [4Fe-4S] cluster is required as a cofactor.

It localises to the cytoplasm. It carries out the reaction N(6)-dimethylallyladenosine(37) in tRNA + (sulfur carrier)-SH + AH2 + 2 S-adenosyl-L-methionine = 2-methylsulfanyl-N(6)-dimethylallyladenosine(37) in tRNA + (sulfur carrier)-H + 5'-deoxyadenosine + L-methionine + A + S-adenosyl-L-homocysteine + 2 H(+). Functionally, catalyzes the methylthiolation of N6-(dimethylallyl)adenosine (i(6)A), leading to the formation of 2-methylthio-N6-(dimethylallyl)adenosine (ms(2)i(6)A) at position 37 in tRNAs that read codons beginning with uridine. In Bradyrhizobium sp. (strain BTAi1 / ATCC BAA-1182), this protein is tRNA-2-methylthio-N(6)-dimethylallyladenosine synthase.